Reading from the N-terminus, the 791-residue chain is Protein Rf1, mitochondrial (791 aa).

A mitochondrion-targeting transit peptide spans 1–27; it reads MARRAASRAVGALRSDGSIQGRGGRAG. The disordered stretch occupies residues 1 to 31; the sequence is MARRAASRAVGALRSDGSIQGRGGRAGGSGA. The segment covering 20 to 30 has biased composition (gly residues); it reads QGRGGRAGGSG. PPR repeat units lie at residues 86–120, 121–156, 157–194, 195–229, 230–264, 265–299, 300–334, 335–369, 370–404, 405–439, 440–474, 475–509, 510–544, 545–579, 580–614, 615–649, 650–684, 685–719, and 720–754; these read DLCTYGILIGCCCRAGRLDLGFAALGNVIKKGFRV, DAIAFTPLLKGLCADKRTSDAMDIVLRRMTELGCIP, NVFSYNILLKGLCDENRSQEALELLHMMADDRGGGSPP, DVVSYTTVINGFFKEGDSDKAYSTYHEMLDRGILP, DVVTYNSIIAALCKAQAMDKAMEVLNTMVKNGVMP, DCMTYNSILHGYCSSGQPKEAIGFLKKMRSDGVEP, DVVTYSLLMDYLCKNGRCMEARKIFDSMTKRGLKP, EITTYGTLLQGYATKGALVEMHGLLDLMVRNGIHP, DHYVFSILICAYAKQGKVDQAMLVFSKMRQQGLNP, NAVTYGAVIGILCKSGRVEDAMLYFEQMIDEGLSP, GNIVYNSLIHGLCTCNKWERAEELILEMLDRGICL, NTIFFNSIIDSHCKEGRVIESEKLFELMVRIGVKP, NVITYNTLINGYCLAGKMDEAMKLLSGMVSVGLKP, NTVTYSTLINGYCKISRMEDALVLFKEMESSGVSP, DIITYNIILQGLFQTRRTAAAKELYVRITESGTQI, ELSTYNIILHGLCKNKLTDDALQMFQNLCLMDLKL, EARTFNIMIDALLKVGRNDEAKDLFVAFSSNGLVP, NYWTYRLMAENIIGQGLLEELDQLFLSMEDNGCTV, and DSGMLNFIVRELLQRGEITRAGTYLSMIDEKHFSL.

It is found in the mitochondrion. Its function is as follows. Reduces the expression of the cytoplasmic male sterility (CMS)-associated mitochondrial gene ORF79, encoding a cytotoxic peptide. Can restore male fertility by blocking ORF79 production via endonucleolytic cleavage of dicistronic ATP6/ORF79 mRNA. Promotes the editing of ATP6 mRNAs independently of its cleavage function. The polypeptide is Protein Rf1, mitochondrial (Rf1) (Oryza sativa subsp. indica (Rice)).